The following is a 138-amino-acid chain: Invertebrate-type lysozyme 6 (138 aa).

Residues 1-18 form the signal peptide; that stretch reads MFVKLCGILAFAVTYASS. In terms of domain architecture, I-type lysozyme spans 19 to 138; the sequence is DCLQCICKKE…WNGIKGLGCS (120 aa). 6 disulfide bridges follow: Cys20/Cys106, Cys25/Cys31, Cys36/Cys45, Cys58/Cys86, Cys76/Cys82, and Cys98/Cys120. The Proton donor role is filled by Glu28. The Nucleophile role is filled by Asp39. 51 to 57 contributes to the substrate binding site; sequence KLSYYKD. Substrate is bound by residues Tyr90 and 113–115; that span reads HNG.

The protein belongs to the glycosyl hydrolase 22 family. Type-I lysozyme subfamily. Expressed in pharyngeal gland cells and duct projections, coelomocytes and intestine.

The enzyme catalyses Hydrolysis of (1-&gt;4)-beta-linkages between N-acetylmuramic acid and N-acetyl-D-glucosamine residues in a peptidoglycan and between N-acetyl-D-glucosamine residues in chitodextrins.. Has bacteriolytic activity against Gram-positive bacteria. The chain is Invertebrate-type lysozyme 6 from Caenorhabditis elegans.